Reading from the N-terminus, the 409-residue chain is Iron(III) salmochelin esterase (409 aa).

Belongs to the Fes family.

The protein localises to the cytoplasm. The catalysed reaction is Fe(III)-C-5-deoxy-beta-D-glucosyl-enterobactin + H2O = Fe(III)-{di[N-(2,3-dihydroxybenzoyl)-L-seryl]-N-(C-5-[deoxy-beta-D-glucosyl]-2,3-dihydroxybenzoyl)-L-serine} + H(+). It carries out the reaction Fe(III)-{di[N-(2,3-dihydroxybenzoyl)-L-seryl]-N-(C-5-[deoxy-beta-D-glucosyl]-2,3-dihydroxybenzoyl)-L-serine} + H2O + H(+) = Fe(III)-{N-(2,3-dihydroxybenzoyl)-L-seryl-N-(C-5-[deoxy-beta-D-glucosyl]-2,3-dihydroxybenzoyl)-L-serine} + N-(2,3-dihydroxybenzoyl)-L-serine. It catalyses the reaction Fe(III)-{N-(2,3-dihydroxybenzoyl)-L-seryl-[N-(C-5-[deoxy-beta-D-glucosyl]-2,3-dihydroxybenzoyl)-L-serine]2} + H2O + H(+) = Fe(III)-{N-(2,3-dihydroxybenzoyl)-L-seryl-N-(C-5-[deoxy-beta-D-glucosyl]-2,3-dihydroxybenzoyl)-L-serine} + N-(C-5-[deoxy-beta-D-glucosyl]-2,3-dihydroxybenzoyl)-L-serine. The enzyme catalyses Fe(III)-di(C-5-deoxy-beta-D-glucosyl)-enterobactin + H2O = Fe(III)-{N-(2,3-dihydroxybenzoyl)-L-seryl-[N-(C-5-[deoxy-beta-D-glucosyl]-2,3-dihydroxybenzoyl)-L-serine]2} + H(+). The catalysed reaction is Fe(III)-{N-(2,3-dihydroxybenzoyl)-L-seryl-[N-(C-5-[deoxy-beta-D-glucosyl]-2,3-dihydroxybenzoyl)-L-serine]2} + H2O + H(+) = Fe(III)-[N-(C-5-[deoxy-beta-D-glucosyl]-2,3-dihydroxybenzoyl)-L-serine]2 + N-(2,3-dihydroxybenzoyl)-L-serine. It carries out the reaction Fe(III)-[N-(C-5-[deoxy-beta-D-glucosyl]-2,3-dihydroxybenzoyl)-L-serine]2 + H2O + H(+) = Fe(III)-[N-(C-5-[deoxy-beta-D-glucosyl]-2,3-dihydroxybenzoyl)-L-serine] + N-(C-5-[deoxy-beta-D-glucosyl]-2,3-dihydroxybenzoyl)-L-serine. Its function is as follows. Catalyzes the hydrolysis of both the apo and Fe3(+)-bound forms of enterobactin (Ent), monoglucosyl-C-Ent (MGE), diglucosyl-C-Ent (DGE) and triglucosyl-C-Ent (TGE). Shows higher catalytic efficiencies on Fe3(+)-bound forms. The initial linear trimer products are, in turn, very good substrates for further hydrolytic cleavage by IroD, leading to complete degradation of the trilactone to DHB-Ser and/or Glc-DHB-Ser monomers. Hydrolyzes MGE and DGE regioselectively. May be the ferric MGE/DGE esterase responsible for cytoplasmic iron release. This Escherichia coli O6:H1 (strain CFT073 / ATCC 700928 / UPEC) protein is Iron(III) salmochelin esterase.